The primary structure comprises 112 residues: Protein preY, mitochondrial (112 aa).

A mitochondrion-targeting transit peptide spans 1–34; the sequence is MLTTTCRRLSQALQRPHALSAVAQRCLRAPGARS. The region spanning 49–95 is the TRM112 domain; sequence HPALLQFLVCPLSKKPLRYDASTNELINDELGIAYPIIDGVPNMIPQ.

It belongs to the PREY family. In terms of assembly, interacts (via TRM112 domain) with NDUFAF5; the interaction is direct and stabilizes NDUFAF5 protein. Interacts with COQ5; the interaction is direct, stabilizes COQ5 protein and associates PYURF with COQ enzyme complex.

Its subcellular location is the mitochondrion. In mitochondria, S-adenosylmethionine-dependent methyltransferase chaperone that supports both coenzyme Q biosynthesis, by stabilizing its components, such as COQ5, and NADH:ubiquinone oxidoreductase complex (complex I, MT-ND1) assembly, by stabilizing complex I assembly factors, such as NDUFAF5. The polypeptide is Protein preY, mitochondrial (Pyurf) (Rattus norvegicus (Rat)).